Here is a 191-residue protein sequence, read N- to C-terminus: Elongation factor P (191 aa).

This sequence belongs to the elongation factor P family.

The protein localises to the cytoplasm. The protein operates within protein biosynthesis; polypeptide chain elongation. Its function is as follows. Involved in peptide bond synthesis. Stimulates efficient translation and peptide-bond synthesis on native or reconstituted 70S ribosomes in vitro. Probably functions indirectly by altering the affinity of the ribosome for aminoacyl-tRNA, thus increasing their reactivity as acceptors for peptidyl transferase. The polypeptide is Elongation factor P (Bartonella henselae (strain ATCC 49882 / DSM 28221 / CCUG 30454 / Houston 1) (Rochalimaea henselae)).